The primary structure comprises 211 residues: Mitotic spindle assembly checkpoint protein MAD2B (211 aa).

The region spanning 13-203 (QVVADVLSEF…SDILKMQLYV (191 aa)) is the HORMA domain. The tract at residues 21–155 (EFLEVAVHLI…FTVLVHTREA (135 aa)) is mediates interaction with REV1 and REV3L and homodimerization.

As to quaternary structure, homooligomer. Heterodimer with REV3L. This dimer forms the minimal DNA polymerase zeta complex (Pol-zeta2), with REV3L bearing DNA polymerase catalytic activity, although its activity is very low in this context. Component of the tetrameric Pol-zeta complex (Pol-zeta4), which consists of REV3L, MAD2L2, POLD2 and POLD3; Pol-zeta4 is the fully active form of DNA polymerase zeta. Component of the shieldin complex, consisting of SHLD1, SHLD2, SHLD3 and MAD2L2/REV7. Within the complex, SHLD2 forms a scaffold which interacts with a SHLD3-MAD2L2 subcomplex via its N-terminus, and with SHLD1 via its C-terminus. Interacts with REV1. Interacts with ADAM9. Interacts with CHAMP1. Interacts with FZR1 (in complex with the anaphase promoting complex APC). May interact with CDC20. Interacts with RAN. Interacts with ELK1; the interaction is direct and recruits MAD2L2 to ELK1-specific promoters. May interact with the JNK kinases MAPK8 and/or MAPK9 to stimulate ELK1 phosphorylation and transcriptional activity upon DNA damage. Interacts with TCF7L2; prevents its binding to promoters and negatively modulates its transcriptional activity. Interacts with YY1AP1. Interacts with PRCC; the interaction is direct. Interacts with POGZ. Interacts with ASTE1.

The protein localises to the nucleus. It localises to the cytoplasm. The protein resides in the cytoskeleton. It is found in the spindle. In terms of biological role, adapter protein able to interact with different proteins and involved in different biological processes. Mediates the interaction between the error-prone DNA polymerase zeta catalytic subunit REV3L and the inserter polymerase REV1, thereby mediating the second polymerase switching in translesion DNA synthesis. Translesion DNA synthesis releases the replication blockade of replicative polymerases, stalled in presence of DNA lesions. Component of the shieldin complex, which plays an important role in repair of DNA double-stranded breaks (DSBs). During G1 and S phase of the cell cycle, the complex functions downstream of TP53BP1 to promote non-homologous end joining (NHEJ) and suppress DNA end resection. Mediates various NHEJ-dependent processes including immunoglobulin class-switch recombination, and fusion of unprotected telomeres. May also regulate another aspect of cellular response to DNA damage through regulation of the JNK-mediated phosphorylation and activation of the transcriptional activator ELK1. Inhibits the FZR1- and probably CDC20-mediated activation of the anaphase promoting complex APC thereby regulating progression through the cell cycle. Regulates TCF7L2-mediated gene transcription and may play a role in epithelial-mesenchymal transdifferentiation. In Rattus norvegicus (Rat), this protein is Mitotic spindle assembly checkpoint protein MAD2B (Mad2l2).